A 435-amino-acid chain; its full sequence is Trigger factor (435 aa).

A PPIase FKBP-type domain is found at Gly163 to Pro248.

It belongs to the FKBP-type PPIase family. Tig subfamily.

It localises to the cytoplasm. It carries out the reaction [protein]-peptidylproline (omega=180) = [protein]-peptidylproline (omega=0). Its function is as follows. Involved in protein export. Acts as a chaperone by maintaining the newly synthesized protein in an open conformation. Functions as a peptidyl-prolyl cis-trans isomerase. This chain is Trigger factor, found in Pediococcus pentosaceus (strain ATCC 25745 / CCUG 21536 / LMG 10740 / 183-1w).